The sequence spans 852 residues: Replication factor C small subunit (852 aa).

One can recognise a DOD-type homing endonuclease domain in the interval 183 to 306 (WLGYFMGSGY…IAYALASFGI (124 aa)).

It belongs to the activator 1 small subunits family. RfcS subfamily. In terms of assembly, heteromultimer composed of three to four small subunits (RfcS) and one to two large subunits (RfcL). Post-translationally, this protein undergoes a protein self splicing that involves a post-translational excision of the intervening region (intein) followed by peptide ligation.

Its function is as follows. Part of the RFC clamp loader complex which loads the PCNA sliding clamp onto DNA. The complex possesses DNA-dependent ATPase activity which is further stimulated by PCNA. The chain is Replication factor C small subunit (rfcS) from Pyrococcus furiosus (strain ATCC 43587 / DSM 3638 / JCM 8422 / Vc1).